Reading from the N-terminus, the 356-residue chain is S-adenosylmethionine:tRNA ribosyltransferase-isomerase (356 aa).

Belongs to the QueA family. Monomer.

Its subcellular location is the cytoplasm. The catalysed reaction is 7-aminomethyl-7-carbaguanosine(34) in tRNA + S-adenosyl-L-methionine = epoxyqueuosine(34) in tRNA + adenine + L-methionine + 2 H(+). It participates in tRNA modification; tRNA-queuosine biosynthesis. Transfers and isomerizes the ribose moiety from AdoMet to the 7-aminomethyl group of 7-deazaguanine (preQ1-tRNA) to give epoxyqueuosine (oQ-tRNA). The polypeptide is S-adenosylmethionine:tRNA ribosyltransferase-isomerase (Escherichia coli (strain ATCC 8739 / DSM 1576 / NBRC 3972 / NCIMB 8545 / WDCM 00012 / Crooks)).